A 101-amino-acid chain; its full sequence is NADH-quinone oxidoreductase subunit K (101 aa).

The next 3 helical transmembrane spans lie at L5–L25, L29–G49, and V62–V82.

The protein belongs to the complex I subunit 4L family. NDH-1 is composed of 14 different subunits. Subunits NuoA, H, J, K, L, M, N constitute the membrane sector of the complex.

It localises to the cell inner membrane. It carries out the reaction a quinone + NADH + 5 H(+)(in) = a quinol + NAD(+) + 4 H(+)(out). NDH-1 shuttles electrons from NADH, via FMN and iron-sulfur (Fe-S) centers, to quinones in the respiratory chain. The immediate electron acceptor for the enzyme in this species is believed to be ubiquinone. Couples the redox reaction to proton translocation (for every two electrons transferred, four hydrogen ions are translocated across the cytoplasmic membrane), and thus conserves the redox energy in a proton gradient. This chain is NADH-quinone oxidoreductase subunit K, found in Syntrophotalea carbinolica (strain DSM 2380 / NBRC 103641 / GraBd1) (Pelobacter carbinolicus).